Reading from the N-terminus, the 494-residue chain is Fumarate hydratase, mitochondrial (494 aa).

The transit peptide at 1–15 (MLRASATRFLSQAKN) directs the protein to the mitochondrion. Residues 128–130 (SGT), 159–162 (HPND), 169–171 (SSN), and threonine 217 each bind substrate. Residue histidine 218 is the Proton donor/acceptor of the active site. The active site involves serine 348. Residues serine 349 and 354–356 (KVN) each bind substrate.

Belongs to the class-II fumarase/aspartase family. Fumarase subfamily. As to quaternary structure, homotetramer.

The protein resides in the mitochondrion matrix. The protein localises to the cytoplasm. It localises to the nucleus. It carries out the reaction (S)-malate = fumarate + H2O. It participates in carbohydrate metabolism; tricarboxylic acid cycle; (S)-malate from fumarate: step 1/1. Its function is as follows. Catalyzes the reversible stereospecific interconversion of fumarate to L-malate. In mitochondrion, catalyzes the hydration of fumarate to L-malate in the tricarboxylic acid (TCA) cycle to facilitate a transition step in the production of energy in the form of NADH. In cytoplasm and nucleus, involved in DNA repair in response to DNA damage: following DNA double-strand breaks (DSBs), translocates from the cytosol to the nucleus and promotes DNA repair by catalyzing the dehydration of L-malate to fumarate. This Rhizopus oryzae (Mucormycosis agent) protein is Fumarate hydratase, mitochondrial.